The primary structure comprises 608 residues: Coilin (608 aa).

A disordered region spans residues 134 to 272 (KETGGYESES…RKKAKRQWLR (139 aa)). Over residues 141–155 (SESEEDELEEEAEEF) the composition is skewed to acidic residues. Over residues 161-179 (ASKKRKTSSKNQSTKRKKC) the composition is skewed to basic residues. Residues 163 to 170 (KKRKTSSK) carry the Nuclear localization signal 1 motif. S187 is modified (phosphoserine). Polar residues predominate over residues 211–228 (DVQSANNDEQNNDSTKPM). Basic and acidic residues predominate over residues 235 to 245 (SQQEESKEHND). Residues 253 to 260 (TKKTPSRS) carry the Nuclear localization signal 2 motif. Residues 256 to 269 (TPSRSARRKKAKRQ) are compositionally biased toward basic residues. One can recognise a Tudor; atypical domain in the interval 410-510 (YEQLVAYTGS…LLDVRSVKTS (101 aa)). Positions 513 to 585 (DSAEVAKSAL…KKGSSSGGSW (73 aa)) are disordered. Positions 558 to 585 (EALSAKKAALSQANNGWNKKGSSSGGSW) are enriched in low complexity.

Belongs to the coilin family. In terms of assembly, homooligomer. Interaction with RNA results in multimerization due to structural alteration in the NOD domain.

It localises to the nucleus. It is found in the cajal body. Functionally, probable component of nuclear coiled bodies, also known as Cajal bodies or CBs, which are involved in the modification and assembly of nucleoplasmic snRNPs. Required for CBs formation. Binds snRNAs and non-specific artificial RNA via the N-terminal part of the NOD domain and via the NLS2 region (212-282) of the IDD domain. The two sites are able to function independently and provide effective RNA-binding in a non-cooperative manner. The polypeptide is Coilin (Arabidopsis thaliana (Mouse-ear cress)).